We begin with the raw amino-acid sequence, 407 residues long: Proteasome-activating nucleotidase (407 aa).

Residues 22–67 are a coiled coil; that stretch reads KEKTQIAELESKVLRLELKNKDVTRENVQIKKENEILKRELDKLRI. ATP is bound by residues 192–197 and His-331; that span reads GTGKTL. Positions 405-407 are docks into pockets in the proteasome alpha-ring to cause gate opening; it reads MYG.

It belongs to the AAA ATPase family. In terms of assembly, homohexamer. The hexameric complex has a two-ring architecture resembling a top hat that caps the 20S proteasome core at one or both ends. Upon ATP-binding, the C-terminus of PAN interacts with the alpha-rings of the proteasome core by binding to the intersubunit pockets.

It localises to the cytoplasm. Functionally, ATPase which is responsible for recognizing, binding, unfolding and translocation of substrate proteins into the archaeal 20S proteasome core particle. Is essential for opening the gate of the 20S proteasome via an interaction with its C-terminus, thereby allowing substrate entry and access to the site of proteolysis. Thus, the C-termini of the proteasomal ATPase function like a 'key in a lock' to induce gate opening and therefore regulate proteolysis. Unfolding activity requires energy from ATP hydrolysis, whereas ATP binding alone promotes ATPase-20S proteasome association which triggers gate opening, and supports translocation of unfolded substrates. The sequence is that of Proteasome-activating nucleotidase from Methanococcus maripaludis (strain C7 / ATCC BAA-1331).